We begin with the raw amino-acid sequence, 1316 residues long: Serine/threonine-protein kinase 36 (1316 aa).

The Protein kinase domain maps to 4 to 254 (YHVLEMIGEG…WPDLLHHPFI (251 aa)). ATP is bound by residues 10 to 18 (IGEGSFGRV) and Lys33. Catalysis depends on Asp125, which acts as the Proton acceptor. Residues 389-418 (QGFPEPRPEAMGRQSTDVVDPENEEPDSDD) form a disordered region. Positions 407 to 418 (VDPENEEPDSDD) are enriched in acidic residues.

The protein belongs to the protein kinase superfamily. Ser/Thr protein kinase family. In terms of assembly, interacts with SPAG16 and KIF27. Mg(2+) serves as cofactor. As to expression, weakly expressed in the heart and thymus, present at moderate to high levels in the lungs, pancreas, and kidneys and at higher levels in the brain and cerebellum. Very highly expressed in the testis.

It is found in the cytoplasm. The protein resides in the nucleus. It localises to the cytoskeleton. Its subcellular location is the cilium axoneme. It catalyses the reaction L-seryl-[protein] + ATP = O-phospho-L-seryl-[protein] + ADP + H(+). The catalysed reaction is L-threonyl-[protein] + ATP = O-phospho-L-threonyl-[protein] + ADP + H(+). Functionally, serine/threonine protein kinase which plays an important role in the sonic hedgehog (Shh) pathway by regulating the activity of GLI transcription factors. Controls the activity of the transcriptional regulators GLI1, GLI2 and GLI3 by opposing the effect of SUFU and promoting their nuclear localization. GLI2 requires an additional function of STK36 to become transcriptionally active, but the enzyme does not need to possess an active kinase catalytic site for this to occur. Required for postnatal development, possibly by regulating the homeostasis of cerebral spinal fluid or ciliary function. Essential for construction of the central pair apparatus of motile cilia. This chain is Serine/threonine-protein kinase 36, found in Mus musculus (Mouse).